Consider the following 423-residue polypeptide: Serine--tRNA ligase (423 aa).

Residue 231–233 (TAE) participates in L-serine binding. An ATP-binding site is contributed by 262–264 (RSE). L-serine is bound at residue Glu285. ATP is bound at residue 349–352 (EISS). Ser384 contacts L-serine.

It belongs to the class-II aminoacyl-tRNA synthetase family. Type-1 seryl-tRNA synthetase subfamily. Homodimer. The tRNA molecule binds across the dimer.

It localises to the cytoplasm. It catalyses the reaction tRNA(Ser) + L-serine + ATP = L-seryl-tRNA(Ser) + AMP + diphosphate + H(+). The enzyme catalyses tRNA(Sec) + L-serine + ATP = L-seryl-tRNA(Sec) + AMP + diphosphate + H(+). The protein operates within aminoacyl-tRNA biosynthesis; selenocysteinyl-tRNA(Sec) biosynthesis; L-seryl-tRNA(Sec) from L-serine and tRNA(Sec): step 1/1. Its function is as follows. Catalyzes the attachment of serine to tRNA(Ser). Is also able to aminoacylate tRNA(Sec) with serine, to form the misacylated tRNA L-seryl-tRNA(Sec), which will be further converted into selenocysteinyl-tRNA(Sec). The chain is Serine--tRNA ligase from Acinetobacter baylyi (strain ATCC 33305 / BD413 / ADP1).